Reading from the N-terminus, the 79-residue chain is Defensin-like protein 117 (79 aa).

The signal sequence occupies residues 1–24 (MTTTKTMLVAFVLTLFFVISSVHC). Cystine bridges form between cysteine 40/cysteine 75, cysteine 46/cysteine 68, cysteine 53/cysteine 73, and cysteine 57/cysteine 74.

It belongs to the DEFL family.

The protein localises to the secreted. This Arabidopsis thaliana (Mouse-ear cress) protein is Defensin-like protein 117.